Consider the following 185-residue polypeptide: Ribosome-recycling factor (185 aa).

Belongs to the RRF family.

It localises to the cytoplasm. Its function is as follows. Responsible for the release of ribosomes from messenger RNA at the termination of protein biosynthesis. May increase the efficiency of translation by recycling ribosomes from one round of translation to another. The sequence is that of Ribosome-recycling factor from Thermosipho africanus (strain TCF52B).